Here is a 298-residue protein sequence, read N- to C-terminus: MAAAEPAVLALPNSGAGGAGAPSGTVPVLFCFSVFARPSSVPHGAGYELLIQKFLSLYGDQIDMHRKFVVQLFAEEWGQYVDLPKGFAVSERCKVRLVPLQIQLTTLGNLTPSSTVFFCCDMQERFRPAIKYFGDIISVGQRLLQGARILGIPVIVTEQYPKGLGSTVQEIDLTGVKLVLPKTKFSMVLPEVEAALAEIPGVRSVVLFGVETHVCIQQTALELVGRGVEVHIVADATSSRSMMDRMFALERLARTGIIVTTSEAVLLQLVADKDHPKFKEIQNLIKASAPESGLLSKV.

A Phosphotyrosine modification is found at Tyr160. An N6-succinyllysine modification is found at Lys279.

It belongs to the isochorismatase family.

In Homo sapiens (Human), this protein is Isochorismatase domain-containing protein 1 (ISOC1).